We begin with the raw amino-acid sequence, 152 residues long: SKP1-like protein 10 (152 aa).

The tract at residues 94 to 152 (IMAANYLNIKSLLDLACQTVADMIKDNTVEHTRKFFNIENDYTHEEEEAVRRENQWGFE) is interaction with the F-box domain of F-box proteins.

It belongs to the SKP1 family. In terms of assembly, part of a SCF (SKP1-cullin-F-box) protein ligase complex. Interacts with CPR1/CPR30. As to expression, expressed in young seedlings, roots, leaves, floral stems, inflorescences, and siliques.

It localises to the nucleus. It participates in protein modification; protein ubiquitination. Functionally, involved in ubiquitination and subsequent proteasomal degradation of target proteins. Together with CUL1, RBX1 and a F-box protein, it forms a SCF E3 ubiquitin ligase complex. The functional specificity of this complex depends on the type of F-box protein. In the SCF complex, it serves as an adapter that links the F-box protein to CUL1. The chain is SKP1-like protein 10 (ASK10) from Arabidopsis thaliana (Mouse-ear cress).